The following is a 647-amino-acid chain: XK-related protein 4 (647 aa).

The segment covering 1–15 has biased composition (basic and acidic residues); the sequence is MAAKSDGRLKMKKSS. Residues 1–44 are disordered; that stretch reads MAAKSDGRLKMKKSSDVAFTPLQNSDNSGSVQGLAPGLPSGSGA. The span at 21-31 shows a compositional bias: polar residues; that stretch reads PLQNSDNSGSV. 2 consecutive transmembrane segments (helical) span residues 112 to 132 and 142 to 162; these read WILA…WLAV and WFGL…VFSF. Ser-197 carries the phosphoserine modification. Residues 197 to 238 form a disordered region; it reads SAAGEGEVRPSTPQRQASNASKSNIAATNSGSNSNGATRTSG. Residues 207–236 show a composition bias toward polar residues; sequence STPQRQASNASKSNIAATNSGSNSNGATRT. 8 helical membrane-spanning segments follow: residues 245 to 265, 303 to 323, 328 to 348, 362 to 382, 393 to 415, 425 to 445, 454 to 474, and 484 to 504; these read CSFC…GQIW, HLLA…CIIV, LQAL…WALA, KPIS…TIAA, VFQL…WIVH, WEEI…WFNV, LFIY…LWYL, and FAIP…VFML.

Belongs to the XK family. Homodimer; homodimerization takes place upon caspase cleavage. Interacts with the processed C-terminus of XRCC4 (protein XRCC4, C-terminus); interaction promotes the phospholipid scramblase activity. In terms of processing, undergoes proteolytic processing by caspase-3 (CASP3), caspase-6 (CASP6) and caspase-7 (CASP7) to generate the XK-related protein 4, processed form, leading to its activation. Highly expressed in expressed in the brain; weakly expressed in the spleen, thymus, uterus, blood vessels and fetus.

Its subcellular location is the cell membrane. It carries out the reaction a 1,2-diacyl-sn-glycero-3-phospho-L-serine(in) = a 1,2-diacyl-sn-glycero-3-phospho-L-serine(out). With respect to regulation, phospholipid scramblase activity is activated upon caspase cleavage to generate the XK-related protein 4, processed form. Does not act prior the onset of apoptosis. Its activity is regulated as follows. Homodimerizes upon caspase cleavage. Phospholipid scramblase activity is activated following interaction with the processed C-terminus of XRCC4 (protein XRCC4, C-terminus). Functionally, phospholipid scramblase that promotes phosphatidylserine exposure on apoptotic cell surface. Phosphatidylserine is a specific marker only present at the surface of apoptotic cells and acts as a specific signal for engulfment. The sequence is that of XK-related protein 4 from Mus musculus (Mouse).